Consider the following 588-residue polypeptide: Proline--tRNA ligase (588 aa).

This sequence belongs to the class-II aminoacyl-tRNA synthetase family. ProS type 1 subfamily. As to quaternary structure, homodimer.

The protein localises to the cytoplasm. It carries out the reaction tRNA(Pro) + L-proline + ATP = L-prolyl-tRNA(Pro) + AMP + diphosphate. Functionally, catalyzes the attachment of proline to tRNA(Pro) in a two-step reaction: proline is first activated by ATP to form Pro-AMP and then transferred to the acceptor end of tRNA(Pro). As ProRS can inadvertently accommodate and process non-cognate amino acids such as alanine and cysteine, to avoid such errors it has two additional distinct editing activities against alanine. One activity is designated as 'pretransfer' editing and involves the tRNA(Pro)-independent hydrolysis of activated Ala-AMP. The other activity is designated 'posttransfer' editing and involves deacylation of mischarged Ala-tRNA(Pro). The misacylated Cys-tRNA(Pro) is not edited by ProRS. The chain is Proline--tRNA ligase from Corynebacterium efficiens (strain DSM 44549 / YS-314 / AJ 12310 / JCM 11189 / NBRC 100395).